Consider the following 326-residue polypeptide: DNA-binding death effector domain-containing protein 2 (326 aa).

The region spanning 25–104 (SLHRMFEVVG…RHDLLPHLAR (80 aa)) is the DED domain. The Nuclear localization signal motif lies at 104–109 (RKRRRP). The disordered stretch occupies residues 104–194 (RKRRRPVSPE…PARPSSEGKV (91 aa)). The segment covering 136-146 (SSSSANSQQGQ) has biased composition (low complexity). A Bipartite nuclear localization signal motif is present at residues 155 to 173 (KRQRRSRGRPSGGARRRRR). Positions 155-174 (KRQRRSRGRPSGGARRRRRG) are enriched in basic residues. Residues 175 to 191 (APAAPQQQSEPARPSSE) are compositionally biased toward low complexity.

Interacts with CASP8, CASP10 and GTF3C3. Homodimerizes and heterodimerizes with DEDD. In terms of tissue distribution, expressed in most tissues. High levels were found in liver, kidney, heart, ovary, spleen, testes, skeletal muscle and peripheral blood leukocytes. Expression was absent or low in colon and small intestine. Expression is relatively high in the tumor cell lines chronic myologenous leukemia K-562 and the colorectal adenocarcinoma SW480. Expression is moderate in the cervical carcinoma HeLa, the Burkitt's lymphoma Raji, the lung carcinoma A-549, and the melanoma G-361. In contrast, two leukemia cell lines, HL-60 (promyelocytic leukemia) and MOLT-4 (lymphoblastic leukemia), show relatively low levels.

It localises to the nucleus. The protein localises to the nucleolus. Its function is as follows. May play a critical role in death receptor-induced apoptosis and may target CASP8 and CASP10 to the nucleus. May regulate degradation of intermediate filaments during apoptosis. May play a role in the general transcription machinery in the nucleus and might be an important regulator of the activity of GTF3C3. The sequence is that of DNA-binding death effector domain-containing protein 2 (DEDD2) from Homo sapiens (Human).